The sequence spans 275 residues: Formamidopyrimidine-DNA glycosylase (275 aa).

The Schiff-base intermediate with DNA role is filled by proline 2. Glutamate 3 functions as the Proton donor in the catalytic mechanism. Lysine 58 functions as the Proton donor; for beta-elimination activity in the catalytic mechanism. The DNA site is built by histidine 93, arginine 111, and arginine 156. An FPG-type zinc finger spans residues phenylalanine 241–arginine 275. The Proton donor; for delta-elimination activity role is filled by arginine 265.

Belongs to the FPG family. In terms of assembly, monomer. The cofactor is Zn(2+).

The enzyme catalyses Hydrolysis of DNA containing ring-opened 7-methylguanine residues, releasing 2,6-diamino-4-hydroxy-5-(N-methyl)formamidopyrimidine.. It catalyses the reaction 2'-deoxyribonucleotide-(2'-deoxyribose 5'-phosphate)-2'-deoxyribonucleotide-DNA = a 3'-end 2'-deoxyribonucleotide-(2,3-dehydro-2,3-deoxyribose 5'-phosphate)-DNA + a 5'-end 5'-phospho-2'-deoxyribonucleoside-DNA + H(+). Its function is as follows. Involved in base excision repair of DNA damaged by oxidation or by mutagenic agents. Acts as a DNA glycosylase that recognizes and removes damaged bases. Has a preference for oxidized purines, such as 7,8-dihydro-8-oxoguanine (8-oxoG). Has AP (apurinic/apyrimidinic) lyase activity and introduces nicks in the DNA strand. Cleaves the DNA backbone by beta-delta elimination to generate a single-strand break at the site of the removed base with both 3'- and 5'-phosphates. This is Formamidopyrimidine-DNA glycosylase from Burkholderia multivorans (strain ATCC 17616 / 249).